A 652-amino-acid chain; its full sequence is Acetyl-coenzyme A synthetase (652 aa).

CoA is bound by residues arginine 191–arginine 194, threonine 311, and asparagine 335. ATP is bound by residues glycine 387–proline 389, aspartate 411–threonine 416, aspartate 500, and arginine 515. Serine 523 contacts CoA. Arginine 526 lines the ATP pocket. Residues valine 537, histidine 539, and isoleucine 542 each coordinate Mg(2+). Arginine 584 is a binding site for CoA. Lysine 609 carries the N6-acetyllysine modification.

This sequence belongs to the ATP-dependent AMP-binding enzyme family. Mg(2+) serves as cofactor. In terms of processing, acetylated. Deacetylation by the SIR2-homolog deacetylase activates the enzyme.

The catalysed reaction is acetate + ATP + CoA = acetyl-CoA + AMP + diphosphate. In terms of biological role, catalyzes the conversion of acetate into acetyl-CoA (AcCoA), an essential intermediate at the junction of anabolic and catabolic pathways. Acs undergoes a two-step reaction. In the first half reaction, Acs combines acetate with ATP to form acetyl-adenylate (AcAMP) intermediate. In the second half reaction, it can then transfer the acetyl group from AcAMP to the sulfhydryl group of CoA, forming the product AcCoA. Enables the cell to use acetate during aerobic growth to generate energy via the TCA cycle, and biosynthetic compounds via the glyoxylate shunt. Acetylates CheY, the response regulator involved in flagellar movement and chemotaxis. The polypeptide is Acetyl-coenzyme A synthetase (Salmonella typhi).